A 173-amino-acid polypeptide reads, in one-letter code: RNA pyrophosphohydrolase (173 aa).

The Nudix hydrolase domain occupies 6–149; the sequence is GFRANVGIIL…KRSVYRRALQ (144 aa). The Nudix box motif lies at 38-59; it reads GGIDRGETPMDAMYRELWEEVG.

This sequence belongs to the Nudix hydrolase family. RppH subfamily. It depends on a divalent metal cation as a cofactor.

Functionally, accelerates the degradation of transcripts by removing pyrophosphate from the 5'-end of triphosphorylated RNA, leading to a more labile monophosphorylated state that can stimulate subsequent ribonuclease cleavage. This is RNA pyrophosphohydrolase from Psychrobacter cryohalolentis (strain ATCC BAA-1226 / DSM 17306 / VKM B-2378 / K5).